The primary structure comprises 50 residues: Apoptotic protease-activating factor 1 (50 aa).

Residues 1–31 (ILKKDNYSYISFYNALIHEGYKDLAALLHSG) form the CARD domain. An NB-ARC domain is found at 46–50 (GGITS).

Monomer. Oligomerizes to a heptameric ring, known as the apoptosome, upon binding of cytochrome c and dATP. Oligomeric Apaf-1 and pro-caspase-9 bind to each other via their respective NH2-terminal CARD domains and consecutively mature caspase-9 is released from the complex. Interacts with APIP. Interacts (via CARD and NACHT domains) with NAIP/BIRC1 (via NACHT domain). Interacts with CIAO2A.

In terms of biological role, oligomeric Apaf-1 mediates the cytochrome c-dependent autocatalytic activation of pro-caspase 9 (Apaf-3), leading to the activation of caspase-3 and apoptosis. This activation requires ATP. This is Apoptotic protease-activating factor 1 (APAF1) from Canis lupus familiaris (Dog).